We begin with the raw amino-acid sequence, 503 residues long: uncharacterized protein (503 aa).

The chain crosses the membrane as a helical span at residues 26–46; that stretch reads ILFLLLGLIILVNISINVATA. Disordered regions lie at residues 155–176, 311–381, 436–456, and 472–503; these read RPLS…MSQM, YDAR…ESHE, QISD…NPGG, and VQEN…GKLN. Basic and acidic residues-rich tracts occupy residues 311–322 and 334–346; these read YDARDQWRRGTE and NPRE…DHNS. Residues 348–367 show a composition bias toward polar residues; it reads AHRQNFSSHTHSQPNHSPPQ. The span at 493–503 shows a compositional bias: basic residues; that stretch reads SLHRSRTGKLN.

It localises to the membrane. This is an uncharacterized protein from Mus musculus (Mouse).